Consider the following 358-residue polypeptide: Serine/threonine-protein phosphatase 2A activator 2 (358 aa).

The protein belongs to the PTPA-type PPIase family.

Its subcellular location is the cytoplasm. It carries out the reaction [protein]-peptidylproline (omega=180) = [protein]-peptidylproline (omega=0). In terms of biological role, PPIases accelerate the folding of proteins. It catalyzes the cis-trans isomerization of proline imidic peptide bonds in oligopeptides. Acts as a regulatory subunit for PP2A-like phosphatases modulating their activity or substrate specificity, probably by inducing a conformational change in the catalytic subunit, a direct target of the PPIase. Can reactivate inactive phosphatase PP2A-phosphatase methylesterase complexes (PP2Ai) in presence of ATP and Mg(2+) by dissociating the inactive form from the complex. This chain is Serine/threonine-protein phosphatase 2A activator 2 (RRD2), found in Candida albicans (strain SC5314 / ATCC MYA-2876) (Yeast).